The sequence spans 180 residues: ATP-dependent protease subunit HslV (180 aa).

Threonine 6 is a catalytic residue. Na(+) is bound by residues alanine 164, cysteine 167, and threonine 170.

The protein belongs to the peptidase T1B family. HslV subfamily. As to quaternary structure, a double ring-shaped homohexamer of HslV is capped on each side by a ring-shaped HslU homohexamer. The assembly of the HslU/HslV complex is dependent on binding of ATP.

The protein resides in the cytoplasm. It catalyses the reaction ATP-dependent cleavage of peptide bonds with broad specificity.. Allosterically activated by HslU binding. In terms of biological role, protease subunit of a proteasome-like degradation complex believed to be a general protein degrading machinery. This chain is ATP-dependent protease subunit HslV, found in Borrelia turicatae (strain 91E135).